Consider the following 662-residue polypeptide: UvrABC system protein B (662 aa).

One can recognise a Helicase ATP-binding domain in the interval 31 to 188; sequence DNIEGGEKAQ…NDLVDIQFER (158 aa). Residue 44-51 participates in ATP binding; the sequence is GATGTGKT. A Beta-hairpin motif is present at residues 97–120; it reads YYDYYQPEAYVPSSDTYIEKDSSV. The region spanning 435–601 is the Helicase C-terminal domain; it reads QIDDLLGEIN…TIKKEIRDLI (167 aa). In terms of domain architecture, UVR spans 626–661; the sequence is KELVKKLEKQMQEAVEVLDFELAAQIRDMMLEVKAL.

The protein belongs to the UvrB family. In terms of assembly, forms a heterotetramer with UvrA during the search for lesions. Interacts with UvrC in an incision complex.

It localises to the cytoplasm. The UvrABC repair system catalyzes the recognition and processing of DNA lesions. A damage recognition complex composed of 2 UvrA and 2 UvrB subunits scans DNA for abnormalities. Upon binding of the UvrA(2)B(2) complex to a putative damaged site, the DNA wraps around one UvrB monomer. DNA wrap is dependent on ATP binding by UvrB and probably causes local melting of the DNA helix, facilitating insertion of UvrB beta-hairpin between the DNA strands. Then UvrB probes one DNA strand for the presence of a lesion. If a lesion is found the UvrA subunits dissociate and the UvrB-DNA preincision complex is formed. This complex is subsequently bound by UvrC and the second UvrB is released. If no lesion is found, the DNA wraps around the other UvrB subunit that will check the other stand for damage. This chain is UvrABC system protein B, found in Streptococcus pneumoniae serotype 2 (strain D39 / NCTC 7466).